The chain runs to 458 residues: Ribosomal protein uS12 methylthiotransferase RimO (458 aa).

The 111-residue stretch at Pro6–Pro116 folds into the MTTase N-terminal domain. 6 residues coordinate [4Fe-4S] cluster: Cys15, Cys51, Cys80, Cys147, Cys151, and Cys154. One can recognise a Radical SAM core domain in the interval Leu133–Arg371. In terms of domain architecture, TRAM spans Glu373–Pro441.

This sequence belongs to the methylthiotransferase family. RimO subfamily. It depends on [4Fe-4S] cluster as a cofactor.

The protein resides in the cytoplasm. It carries out the reaction L-aspartate(89)-[ribosomal protein uS12]-hydrogen + (sulfur carrier)-SH + AH2 + 2 S-adenosyl-L-methionine = 3-methylsulfanyl-L-aspartate(89)-[ribosomal protein uS12]-hydrogen + (sulfur carrier)-H + 5'-deoxyadenosine + L-methionine + A + S-adenosyl-L-homocysteine + 2 H(+). Functionally, catalyzes the methylthiolation of an aspartic acid residue of ribosomal protein uS12. This Xanthomonas euvesicatoria pv. vesicatoria (strain 85-10) (Xanthomonas campestris pv. vesicatoria) protein is Ribosomal protein uS12 methylthiotransferase RimO.